Consider the following 768-residue polypeptide: P-selectin (768 aa).

A signal peptide spans 1–41 (MAGCPKGSWKPRLRSVVLGAAQLIWLSALISELVNRKKVAT). Over 42–709 (WTYNYSTKAY…QAGTLTIQEA (668 aa)) the chain is Extracellular. 3 N-linked (GlcNAc...) asparagine glycosylation sites follow: N45, N54, and N107. One can recognise a C-type lectin domain in the interval 58–158 (AFCKRHFTDL…PCFKRKRALC (101 aa)). 20 disulfide bridges follow: C60–C158, C131–C150, C168–C183, C185–C194, C200–C244, C230–C257, C262–C306, C292–C319, C324–C368, C354–C381, C386–C430, C416–C443, C448–C492, C478–C505, C510–C554, C540–C567, C580–C624, C610–C637, C642–C686, and C672–C699. Positions 121, 123, and 124 each coordinate Ca(2+). N123 lines the a carbohydrate pocket. A carbohydrate is bound by residues E133 and N146. The Ca(2+) site is built by N146 and D147. Residues 159–195 (YTASCQDMSCNSQGERIETIGSYTCSCYPGFYGPECE) form the EGF-like domain. 8 Sushi domains span residues 198 to 259 (QECG…QCKA), 260 to 321 (VQCQ…TCEA), 322 to 383 (IACE…VCEA), 384 to 445 (LQCQ…ECQA), 446 to 507 (VSCT…MCEA), 508 to 569 (IKCP…TCKG), 578 to 639 (VRCP…VCRA), and 640 to 701 (VKCS…TCQA). N-linked (GlcNAc...) asparagine glycosylation occurs at N212. N347 carries N-linked (GlcNAc...) asparagine glycosylation. N456 carries an N-linked (GlcNAc...) asparagine glycan. N-linked (GlcNAc...) asparagine glycosylation is present at N603. Residues N654, N661, and N679 are each glycosylated (N-linked (GlcNAc...) asparagine). Residues 710 to 733 (LTYLGGALASTSGLAVGGTLLALL) traverse the membrane as a helical segment. The Cytoplasmic segment spans residues 734–768 (RKRLRKKDDGKCPLNPHSHLGTYGVFTNAAYDPTP). A lipid anchor (S-palmitoyl cysteine; alternate) is attached at C745. Residue C745 is the site of S-stearoyl cysteine; alternate attachment. Positions 756–759 (YGVF) match the Endocytosis signal motif. The interaction with SNX17 stretch occupies residues 759-768 (FTNAAYDPTP).

The protein belongs to the selectin/LECAM family. As to quaternary structure, interacts with SNX17. Interacts with SELPLG/PSGL1 and PODXL2 and mediates neutrophil adhesion and leukocyte rolling. This interaction requires the sialyl-Lewis X epitope of SELPLG and PODXL2, and specific tyrosine sulfation on SELPLG. Interacts (via C-type lectin domain) with alpha-IIb/beta3 integrin ITGA2B:ITGB3 and alpha-V/beta-3 integrin ITGAV:ITGB3. Interacts with alpha5/beta1 integrin ITGA5:ITGB1 and alpha4/beta1 integrin ITGA4:ITGB. In terms of tissue distribution, not detected in the absence of exposure to lipopolysaccharide (LPS). Detected only after exposure to lipopolysaccharide (LPS) in the tissues examined: spleen, lung, brain, liver, heart, kidney, thymus and small intestine.

It localises to the cell membrane. Functionally, ca(2+)-dependent receptor for myeloid cells that binds to carbohydrates on neutrophils and monocytes. Mediates the interaction of activated endothelial cells or platelets with leukocytes. The ligand recognized is sialyl-Lewis X. Mediates rapid rolling of leukocyte rolling over vascular surfaces during the initial steps in inflammation through interaction with SELPLG. Mediates cell-cell interactions and cell adhesion via the interaction with integrin alpha-IIb/beta3 (ITGA2B:ITGB3) and integrin alpha-V/beta-3 (ITGAV:ITGB3). This chain is P-selectin (Selp), found in Rattus norvegicus (Rat).